The sequence spans 110 residues: FMRFamide-like neuropeptides 11 (110 aa).

Positions 1–22 are cleaved as a signal peptide; that stretch reads MTQFSALALLLIVFVAASFAQS. Positions 23–29 are excised as a propeptide; that stretch reads YDDVSAE. Residues Phe-40 and Phe-54 each carry the phenylalanine amide modification. The segment at 60 to 85 is disordered; sequence LDEEDFAPESPLQGKRNGAPQPFVRF. A Glutamine amide modification is found at Gln-72. Residue Phe-85 is modified to Phenylalanine amide. The propeptide occupies 88 to 110; sequence SGQLDHMHDLLSTLQKLKFANNK.

The protein belongs to the FARP (FMRFamide related peptide) family. In terms of tissue distribution, each flp gene is expressed in a distinct set of neurons. Flp-11 is expressed in the DD, VD and DVB motor neurons, the PVC and URX interneurons, and the AUA, BAG, DA, LUA, and SAB neurons. Also expressed in head muscle, socket or sheath cells and uterine cells. Expressed exclusively in PHC sensory neurons in males. Expressed in AVK and RIS interneurons.

It localises to the secreted. Its function is as follows. FMRFamides and FMRFamide-like peptides are neuropeptides. Induces sleep-like quiescence behavior following release from RIS interneuron. Helps to sustain locomotion stop after gamma-aminobutyric acid (GABA) induces fast slowing response. Inhibits the late-stage body bend swimming frequency in animals through several receptors including frpr-3, npr-4 and npr-22. Potent inhibitor of the activity of the dissected pharyngeal myogenic muscle system. Acts as a ligand for the npr-22 receptor in vitro. In terms of biological role, acts as a ligand for the npr-22 receptor in vitro. In Caenorhabditis elegans, this protein is FMRFamide-like neuropeptides 11.